Reading from the N-terminus, the 88-residue chain is MLEDKDRRIQELYASLLEMSERAVQYPAKGHQTPMLCVAREFNCLRAITGQKVHVTKMKRELTDAAELVIDAMRPNPQVDLNNFVNRV.

This is an uncharacterized protein from Orgyia pseudotsugata (Douglas-fir tussock moth).